The primary structure comprises 564 residues: MEGQAQPYPFAAVQRGTEVAPQAPFNFSRRYACDRCRGHKLRCIRDQMTVDSPCQRCRKAREKCTIGSSTRPVPARLNRSSQGHKLPGATSSASLTTAAPALSMPPQQALAWATGLGDTEQGDALHLSSVPWLDMFDSAMLDSACDSNHELDFADRSSGSGSGSRGAADDQDGPGDGRVHTITPTSQGTTAVANPFLPGHEFDFSPRFDMPGEQCNSDFEKDCTGAPVHAHLPADERSHVASVEFMHHPVAPIHPPTMASSHRTHSTASNDSSKDSTTGVRDACIQELNELSSTLTKDLHTVVDCKLASSFLFTRSNKGPDEYLFKTLDGSSSQESAIGRMLQGSEKFLDIMKRFNEPAQSAPPFVGLSLRVDAHDFGLLAEAVDGSKNSSEATQLDRRWRILHSYLERRNESPNPLSFGSWLGDNLTYGLARKPDMTAKAAVLLCYTNLLWIYETVFFVICHTLECSPSLAPAIKLPQTVPGLEINGFVLQNHPSLQIKILTQVSSYMLDSVEKALQNMLSDSTFQALLETVLQQEGLQYSPGEETGMISVRCLIDKVNKMLD.

A DNA-binding region (zn(2)-C6 fungal-type) is located at residues 33-64; it reads CDRCRGHKLRCIRDQMTVDSPCQRCRKAREKC. Disordered stretches follow at residues 68-93, 152-197, and 252-278; these read SSTRPVPARLNRSSQGHKLPGATSSA, DFAD…NPFL, and PIHPPTMASSHRTHSTASNDSSKDSTT. 2 stretches are compositionally biased toward polar residues: residues 182–192 and 258–278; these read ITPTSQGTTAV and MASSHRTHSTASNDSSKDSTT.

It is found in the nucleus. In terms of biological role, transcription factor that specifically regulates the expression of the gene cluster that mediates the biosynthesis of the mycotoxins phomacins, leucine-derived cytochalasans with potent actin polymerization-inhibitory activities and monocot-specific antigerminative activities. The chain is Phomacin cluster regulator phmR from Phaeosphaeria nodorum (strain SN15 / ATCC MYA-4574 / FGSC 10173) (Glume blotch fungus).